The following is a 262-amino-acid chain: Methylthioribulose-1-phosphate dehydratase (262 aa).

Cysteine 115 provides a ligand contact to substrate. 2 residues coordinate Zn(2+): histidine 133 and histidine 135. The Proton donor/acceptor role is filled by glutamate 158. A Zn(2+)-binding site is contributed by histidine 223.

It belongs to the aldolase class II family. MtnB subfamily. Zn(2+) is required as a cofactor.

The protein resides in the cytoplasm. The catalysed reaction is 5-(methylsulfanyl)-D-ribulose 1-phosphate = 5-methylsulfanyl-2,3-dioxopentyl phosphate + H2O. It functions in the pathway amino-acid biosynthesis; L-methionine biosynthesis via salvage pathway; L-methionine from S-methyl-5-thio-alpha-D-ribose 1-phosphate: step 2/6. In terms of biological role, catalyzes the dehydration of methylthioribulose-1-phosphate (MTRu-1-P) into 2,3-diketo-5-methylthiopentyl-1-phosphate (DK-MTP-1-P). The sequence is that of Methylthioribulose-1-phosphate dehydratase from Meyerozyma guilliermondii (strain ATCC 6260 / CBS 566 / DSM 6381 / JCM 1539 / NBRC 10279 / NRRL Y-324) (Yeast).